The following is a 587-amino-acid chain: Aspartate--tRNA ligase (587 aa).

Glutamate 174 lines the L-aspartate pocket. The segment at 198–201 (QITK) is aspartate. Arginine 220 is an L-aspartate binding site. Residues 220–222 (RDE) and glutamine 229 contribute to the ATP site. Residue histidine 443 participates in L-aspartate binding. Glutamate 477 is a binding site for ATP. Arginine 484 serves as a coordination point for L-aspartate. 529 to 532 (GLDR) contacts ATP.

This sequence belongs to the class-II aminoacyl-tRNA synthetase family. Type 1 subfamily. In terms of assembly, homodimer.

It is found in the cytoplasm. It catalyses the reaction tRNA(Asp) + L-aspartate + ATP = L-aspartyl-tRNA(Asp) + AMP + diphosphate. Its function is as follows. Catalyzes the attachment of L-aspartate to tRNA(Asp) in a two-step reaction: L-aspartate is first activated by ATP to form Asp-AMP and then transferred to the acceptor end of tRNA(Asp). This Streptococcus pneumoniae (strain 70585) protein is Aspartate--tRNA ligase.